A 203-amino-acid chain; its full sequence is Chaperonin-like RbcX protein 2, chloroplastic (203 aa).

A chloroplast-targeting transit peptide spans 1-78; it reads MVSAWFVVGS…RKSKKLLIVN (78 aa).

This sequence belongs to the RbcX family. Homodimer. Interacts with rbcL, atpB and RBCS-1B.

Its subcellular location is the plastid. It is found in the chloroplast stroma. Chaperone involved in RuBisCO assembly process. The polypeptide is Chaperonin-like RbcX protein 2, chloroplastic (Arabidopsis thaliana (Mouse-ear cress)).